The sequence spans 632 residues: Lipoma-preferred partner homolog (632 aa).

2 disordered regions span residues 1–118 (MSHP…RSSL) and 135–249 (SSPY…RSYN). The segment covering 26-40 (THSFGTPSISVSTQQ) has biased composition (polar residues). Low complexity predominate over residues 41–53 (PPKKFAPVVAPKP). N6-acetyllysine is present on K109. Phosphoserine occurs at positions 117 and 152. Residues 144-160 (PGSSSSIASPPVSTPVT) show a composition bias toward low complexity. Composition is skewed to polar residues over residues 172 to 182 (PLTATKKSATK) and 206 to 239 (SYSTASTSSRPAFNVQVKSAQPSTHYMTGSSSGQ). Y241 bears the Phosphotyrosine mark. R246 bears the Omega-N-methylarginine mark. Residue K324 forms a Glycyl lysine isopeptide (Lys-Gly) (interchain with G-Cter in SUMO1) linkage. 3 LIM zinc-binding domains span residues 434 to 493 (GRCA…INTL), 494 to 554 (EQCS…KFAP), and 555 to 623 (RCSV…RIRV).

This sequence belongs to the zyxin/ajuba family. In terms of assembly, interacts with PDZ domains of SCRIB, with VASP and with ACTN1/alpha-actinin.

The protein resides in the nucleus. It localises to the cytoplasm. The protein localises to the cell junction. May play a structural role at sites of cell adhesion in maintaining cell shape and motility. In addition to these structural functions, it may also be implicated in signaling events and activation of gene transcription. May be involved in signal transduction from cell adhesion sites to the nucleus allowing successful integration of signals arising from soluble factors and cell-cell adhesion. Also suggested to serve as a scaffold protein upon which distinct protein complexes are assembled in the cytoplasm and in the nucleus. The chain is Lipoma-preferred partner homolog (Lpp) from Rattus norvegicus (Rat).